Reading from the N-terminus, the 188-residue chain is uncharacterized protein (188 aa).

Positions 57–80 are disordered; it reads NDDVAPVAEGPKQERRSPSRNIGR.

This sequence belongs to the transposase 25 family.

This is an uncharacterized protein from Sinorhizobium fredii (strain NBRC 101917 / NGR234).